Reading from the N-terminus, the 117-residue chain is UPF0102 protein RSKD131_0118 (117 aa).

Belongs to the UPF0102 family.

This is UPF0102 protein RSKD131_0118 from Cereibacter sphaeroides (strain KD131 / KCTC 12085) (Rhodobacter sphaeroides).